A 601-amino-acid chain; its full sequence is Tubulin polyglutamylase ttll-4 (601 aa).

Positions 1–18 (MSSGYSSAPSVSHTSSDT) are enriched in polar residues. The interval 1 to 37 (MSSGYSSAPSVSHTSSDTDLNRIDSYDDGAEETTDEQ) is disordered. The 339-residue stretch at 138 to 476 (QARLTWCHNS…YVPPSFDKLS (339 aa)) folds into the TTL domain. ATP-binding positions include lysine 254, 260–261 (RG), 282–285 (QHYI), and 295–297 (KFD). Arginine 260 is a binding site for a protein. Arginine 321 contributes to the L-glutamate binding site. An ATP-binding site is contributed by 342 to 343 (TN). Residues tyrosine 344, serine 345, and lysine 362 each contribute to the L-glutamate site. Aspartate 422, glutamate 435, and asparagine 437 together coordinate Mg(2+). Lysine 453 is an L-glutamate binding site.

The protein belongs to the tubulin--tyrosine ligase family. The cofactor is Mg(2+). In terms of tissue distribution, expressed in many sensory neurons in amphid.

The enzyme catalyses L-glutamyl-[protein] + L-glutamate + ATP = gamma-L-glutamyl-L-glutamyl-[protein] + ADP + phosphate + H(+). In terms of biological role, monoglutamylase which modifies tubulin, adding a single glutamate on the gamma-carboxyl group of specific glutamate residues of target proteins. Involved in the side-chain initiation step of the polyglutamylation reaction but not in the elongation step. Preferentially modifies beta-tail tubulin over the alpha-tubulin. Involved in side-chain glutamylation of tubulin in sensory cilia. Together with ttll-5 and ttll-11, required for male mating. In Caenorhabditis elegans, this protein is Tubulin polyglutamylase ttll-4.